A 210-amino-acid polypeptide reads, in one-letter code: Na(+)-translocating NADH-quinone reductase subunit D (210 aa).

6 helical membrane-spanning segments follow: residues Pro14–Val34, Leu42–Ile62, Ile72–Ala92, Val103–Met123, Phe131–Val151, and Asn178–Ile198.

The protein belongs to the NqrDE/RnfAE family. Composed of six subunits; NqrA, NqrB, NqrC, NqrD, NqrE and NqrF.

The protein localises to the cell inner membrane. It carries out the reaction a ubiquinone + n Na(+)(in) + NADH + H(+) = a ubiquinol + n Na(+)(out) + NAD(+). In terms of biological role, NQR complex catalyzes the reduction of ubiquinone-1 to ubiquinol by two successive reactions, coupled with the transport of Na(+) ions from the cytoplasm to the periplasm. NqrA to NqrE are probably involved in the second step, the conversion of ubisemiquinone to ubiquinol. The sequence is that of Na(+)-translocating NADH-quinone reductase subunit D from Shewanella sp. (strain ANA-3).